The primary structure comprises 457 residues: Siroheme synthase (457 aa).

The tract at residues 1-204 is precorrin-2 dehydrogenase /sirohydrochlorin ferrochelatase; the sequence is MDHLPIFCQL…NDQKAITETT (204 aa). Residues 22-23 and 43-44 each bind NAD(+); these read DV and LA. Phosphoserine is present on Ser128. The uroporphyrinogen-III C-methyltransferase stretch occupies residues 216–457; it reads GEVVLVGAGP…RDKLNWFSNH (242 aa). Pro225 lines the S-adenosyl-L-methionine pocket. Asp248 serves as the catalytic Proton acceptor. Residue Lys270 is the Proton donor of the active site. S-adenosyl-L-methionine-binding positions include 301-303, Ile306, 331-332, Met382, and Gly411; these read GGD and TA.

It in the N-terminal section; belongs to the precorrin-2 dehydrogenase / sirohydrochlorin ferrochelatase family. This sequence in the C-terminal section; belongs to the precorrin methyltransferase family.

The enzyme catalyses uroporphyrinogen III + 2 S-adenosyl-L-methionine = precorrin-2 + 2 S-adenosyl-L-homocysteine + H(+). The catalysed reaction is precorrin-2 + NAD(+) = sirohydrochlorin + NADH + 2 H(+). It carries out the reaction siroheme + 2 H(+) = sirohydrochlorin + Fe(2+). It functions in the pathway cofactor biosynthesis; adenosylcobalamin biosynthesis; precorrin-2 from uroporphyrinogen III: step 1/1. The protein operates within cofactor biosynthesis; adenosylcobalamin biosynthesis; sirohydrochlorin from precorrin-2: step 1/1. It participates in porphyrin-containing compound metabolism; siroheme biosynthesis; precorrin-2 from uroporphyrinogen III: step 1/1. Its pathway is porphyrin-containing compound metabolism; siroheme biosynthesis; siroheme from sirohydrochlorin: step 1/1. It functions in the pathway porphyrin-containing compound metabolism; siroheme biosynthesis; sirohydrochlorin from precorrin-2: step 1/1. Its function is as follows. Multifunctional enzyme that catalyzes the SAM-dependent methylations of uroporphyrinogen III at position C-2 and C-7 to form precorrin-2 via precorrin-1. Then it catalyzes the NAD-dependent ring dehydrogenation of precorrin-2 to yield sirohydrochlorin. Finally, it catalyzes the ferrochelation of sirohydrochlorin to yield siroheme. This is Siroheme synthase from Escherichia coli O45:K1 (strain S88 / ExPEC).